Reading from the N-terminus, the 84-residue chain is Probable cyclin-dependent kinases regulatory subunit (84 aa).

The protein belongs to the CKS family. Monomer in solution; may form a homohexamer that can probably bind six kinase subunits.

Binds to the catalytic subunit of the cyclin dependent kinases and is essential for their biological function. This chain is Probable cyclin-dependent kinases regulatory subunit, found in Physarum polycephalum (Slime mold).